We begin with the raw amino-acid sequence, 124 residues long: Small ribosomal subunit protein uS12 (124 aa).

The interval 1 to 22 (MATINQLVRKPRSRKVAKSDVP) is disordered. 3-methylthioaspartic acid is present on aspartate 89. The interval 104–124 (TAGVNDRRQGRSKYGAKRGKS) is disordered. Residues 113-124 (GRSKYGAKRGKS) show a composition bias toward basic residues.

It belongs to the universal ribosomal protein uS12 family. As to quaternary structure, part of the 30S ribosomal subunit. Contacts proteins S8 and S17. May interact with IF1 in the 30S initiation complex.

In terms of biological role, with S4 and S5 plays an important role in translational accuracy. Interacts with and stabilizes bases of the 16S rRNA that are involved in tRNA selection in the A site and with the mRNA backbone. Located at the interface of the 30S and 50S subunits, it traverses the body of the 30S subunit contacting proteins on the other side and probably holding the rRNA structure together. The combined cluster of proteins S8, S12 and S17 appears to hold together the shoulder and platform of the 30S subunit. The chain is Small ribosomal subunit protein uS12 from Hahella chejuensis (strain KCTC 2396).